Here is a 99-residue protein sequence, read N- to C-terminus: Integration host factor subunit beta (99 aa).

It belongs to the bacterial histone-like protein family. In terms of assembly, heterodimer of an alpha and a beta chain.

In terms of biological role, this protein is one of the two subunits of integration host factor, a specific DNA-binding protein that functions in genetic recombination as well as in transcriptional and translational control. The polypeptide is Integration host factor subunit beta (Rhizobium etli (strain CIAT 652)).